Reading from the N-terminus, the 156-residue chain is SsrA-binding protein (156 aa).

Residues 135-156 form a disordered region; the sequence is HALRERQDRREADRAMSERKDR.

It belongs to the SmpB family.

It localises to the cytoplasm. Required for rescue of stalled ribosomes mediated by trans-translation. Binds to transfer-messenger RNA (tmRNA), required for stable association of tmRNA with ribosomes. tmRNA and SmpB together mimic tRNA shape, replacing the anticodon stem-loop with SmpB. tmRNA is encoded by the ssrA gene; the 2 termini fold to resemble tRNA(Ala) and it encodes a 'tag peptide', a short internal open reading frame. During trans-translation Ala-aminoacylated tmRNA acts like a tRNA, entering the A-site of stalled ribosomes, displacing the stalled mRNA. The ribosome then switches to translate the ORF on the tmRNA; the nascent peptide is terminated with the 'tag peptide' encoded by the tmRNA and targeted for degradation. The ribosome is freed to recommence translation, which seems to be the essential function of trans-translation. In Kineococcus radiotolerans (strain ATCC BAA-149 / DSM 14245 / SRS30216), this protein is SsrA-binding protein.